We begin with the raw amino-acid sequence, 103 residues long: UPF0145 protein RSKD131_1772 (103 aa).

The protein belongs to the UPF0145 family.

In Cereibacter sphaeroides (strain KD131 / KCTC 12085) (Rhodobacter sphaeroides), this protein is UPF0145 protein RSKD131_1772.